The primary structure comprises 207 residues: Basic helix-loop-helix transcription factor scleraxis (207 aa).

Disordered stretches follow at residues 1 to 91 (MSFA…RDRT) and 151 to 183 (AFFH…QPKQ). Positions 73–91 (PGREPRQRHTANARERDRT) are enriched in basic and acidic residues. The bHLH domain occupies 78–130 (RQRHTANARERDRTNSVNTAFTALRTLIPTEPADRKLSKIETLRLASSYISHL). Over residues 161 to 171 (PLPPPPPPPPL) the composition is skewed to pro residues.

As to quaternary structure, efficient DNA binding requires dimerization with another bHLH protein. Dimerizes and binds the E-box consensus sequence with E12. Expressed in mesenchymal precursors of cartilage and in connective tissue. Highly expressed in tendons in the limb, tongue and diaphragm and in cartilage of the bronchi.

The protein localises to the nucleus. Its function is as follows. Plays an early essential role in mesoderm formation, as well as a later role in formation of somite-derived chondrogenic lineages. This Mus musculus (Mouse) protein is Basic helix-loop-helix transcription factor scleraxis (Scx).